Reading from the N-terminus, the 419-residue chain is L-rhamnose isomerase (419 aa).

Mn(2+)-binding residues include histidine 262, aspartate 294, and aspartate 296.

Belongs to the rhamnose isomerase family. Homotetramer. Mn(2+) serves as cofactor.

It is found in the cytoplasm. It catalyses the reaction L-rhamnopyranose = L-rhamnulose. It participates in carbohydrate degradation; L-rhamnose degradation; glycerone phosphate from L-rhamnose: step 1/3. Its function is as follows. Catalyzes the interconversion of L-rhamnose and L-rhamnulose. The polypeptide is L-rhamnose isomerase (Escherichia coli O17:K52:H18 (strain UMN026 / ExPEC)).